A 1375-amino-acid chain; its full sequence is Protein lingerer (1375 aa).

The interval 1-69 (MSTQTRSGGG…KAQPKATTEQ (69 aa)) is disordered. The segment covering 53 to 62 (SKTDKPEKAQ) has biased composition (basic and acidic residues). Residues 84–124 (QINEKVLLLLTMTQRSEEEVCCALNECDYDLEAAANFLIEE) enclose the UBA domain. Composition is skewed to low complexity over residues 142–161 (ANNT…GNGN) and 173–184 (SNRGGTRGSSDS). Residues 142 to 286 (ANNTADGAAG…GSGRGGNANE (145 aa)) form a disordered region. The span at 185 to 204 (RGWRGRETRENERNQRESRE) shows a compositional bias: basic and acidic residues. Over residues 228–282 (RNGGGRSGPGGGGRGGGFVSRSGRGGGRMGGRTGGPRGDRGSGGPGGAYGSGRGG) the composition is skewed to gly residues. Phosphotyrosine is present on Tyr-321. The residue at position 324 (Ser-324) is a Phosphoserine. 2 stretches are compositionally biased toward polar residues: residues 374–387 (VQQG…SSSG) and 395–412 (ATLS…SAAV). Disordered stretches follow at residues 374 to 453 (VQQG…ASPD) and 613 to 646 (FEPL…QQQQ). Residues 426–441 (SGAGTGASAAAGGGAG) show a composition bias toward gly residues. 2 stretches are compositionally biased toward low complexity: residues 442–453 (STPSSFVSASPD) and 629–646 (QQQQ…QQQQ). At Ser-672 the chain carries Phosphoserine. Thr-673 bears the Phosphothreonine mark. Ser-674 carries the phosphoserine modification. The span at 750–767 (QGYGSYQPSSYQQQAGSG) shows a compositional bias: low complexity. Disordered regions lie at residues 750–801 (QGYG…SGNA), 869–894 (SVST…GQTG), 987–1036 (KNTS…GGSG), 1203–1234 (SKGG…DLTS), and 1251–1277 (EKQS…TSAQ). Over residues 768 to 781 (AQSGTGAVSGGGGT) the composition is skewed to gly residues. Composition is skewed to low complexity over residues 789–801 (GGSS…SGNA), 869–882 (SVST…NSGS), and 987–1008 (KNTS…TGNA). Residues 1009–1036 (SGQGAGASTGGVGSSSGAGGAGSGGGSG) are compositionally biased toward gly residues. Polar residues predominate over residues 1265 to 1277 (MPNTQTAGGTSAQ).

At stage 11, expression is restricted to the neuroblasts, predominant in the central nervous system (CNS), including the brain and ventral nerve cord, and in the PNS. Later embryonic expression is seen in the gonads. Late third instar larvae show expression in the CNS, imaginal disks (including genital, eye-antennal, leg, wing and haltere disks), and gonads. In the larval brain, it is expressed in all of the glial cells and in clusters of neurons that projected contralaterally. In the larval ventral ganglion, it is expressed in subperineurial glia, peripheral exit glia, and a number of interneurons, but not in motor neurons. Isoform B is abundantly expressed in males and females. Isoform D is male specific and expressed at low levels.

The protein localises to the cytoplasm. Its function is as follows. Acts in the nervous system to mediate the control of copulatory organs during courtship. The polypeptide is Protein lingerer (Drosophila melanogaster (Fruit fly)).